We begin with the raw amino-acid sequence, 1384 residues long: ABC transporter C family member 2 (1384 aa).

Positions 104–388 (NKISVATKIF…LPEAIHRALS (285 aa)) constitute an ABC transmembrane type-1 1 domain. 5 consecutive transmembrane segments (helical) span residues 112 to 132 (IFVAIVSILSPLCLKYFIYYI), 140 to 160 (TFKFGFLLCVLLFLSSLSLTL), 226 to 246 (IFVFPFQILALLILLCWIVGL), 247 to 267 (SGLVGFGVMVVSIPLCTFLST), and 333 to 353 (MITQVTSALVLVATFSTYALT). The ABC transporter 1 domain maps to 505–724 (IEYDGAVQPS…GIDFESIMKT (220 aa)). ATP is bound at residue 537 to 544 (GIVGSGKT). Residues 729-756 (IDENDQSSTSTTDKKSSTSSSSSELKKS) form a disordered region. Low complexity predominate over residues 735–756 (SSTSTTDKKSSTSSSSSELKKS). 5 helical membrane-spanning segments follow: residues 813 to 833 (LFFLTCALYFISQIIFQLSDF), 852 to 872 (ILYYCIFIGAFIVFLVVRYFM), 941 to 961 (LFMMIYITPLISIPFAILVVV), 1036 to 1056 (GIRLEFITALIVFFTAFSSLF), and 1061 to 1081 (GFSVLAVTTALGICSYLNWTI). An ABC transmembrane type-1 2 domain is found at 814–1093 (FFLTCALYFI…MTELEVKMNS (280 aa)). The ABC transporter 2 domain maps to 1137-1371 (VEFKNVEIKY…EGSRFKKLVK (235 aa)). 1171 to 1178 (GRTGAGKS) provides a ligand contact to ATP.

This sequence belongs to the ABC transporter superfamily. ABCC family. Conjugate transporter (TC 3.A.1.208) subfamily.

Its subcellular location is the membrane. The sequence is that of ABC transporter C family member 2 (abcC2) from Dictyostelium discoideum (Social amoeba).